Reading from the N-terminus, the 1319-residue chain is DNA (cytosine-5)-methyltransferase CMT2 (1319 aa).

The span at M1–A15 shows a compositional bias: pro residues. Disordered stretches follow at residues M1 to S34, A142 to S189, S265 to A302, and K442 to T468. The segment covering A266 to S279 has biased composition (polar residues). A compositionally biased stretch (basic and acidic residues) spans R285–E296. In terms of domain architecture, BAH spans Y602–E719. The SAM-dependent MTase C5-type domain occupies L758 to K1296. The region spanning F863 to R928 is the Chromo domain. C941 is a catalytic residue.

The protein localises to the nucleus. The catalysed reaction is a 2'-deoxycytidine in DNA + S-adenosyl-L-methionine = a 5-methyl-2'-deoxycytidine in DNA + S-adenosyl-L-homocysteine + H(+). In terms of biological role, involved in CpXpG DNA methylation. This chain is DNA (cytosine-5)-methyltransferase CMT2, found in Oryza sativa subsp. japonica (Rice).